The sequence spans 132 residues: Sirohydrochlorin cobaltochelatase (132 aa).

The Proton acceptor role is filled by histidine 10. Residue histidine 10 coordinates Co(2+). Residues arginine 46 and 69–74 (ISYGLH) contribute to the substrate site. Histidine 74 lines the Co(2+) pocket.

The protein belongs to the CbiX family. CbiXS subfamily. Homotetramer; dimer of dimers.

It carries out the reaction Co-sirohydrochlorin + 2 H(+) = sirohydrochlorin + Co(2+). The protein operates within cofactor biosynthesis; adenosylcobalamin biosynthesis; cob(II)yrinate a,c-diamide from sirohydrochlorin (anaerobic route): step 1/10. Catalyzes the insertion of Co(2+) into sirohydrochlorin as part of the anaerobic pathway to cobalamin biosynthesis. The polypeptide is Sirohydrochlorin cobaltochelatase (Archaeoglobus fulgidus (strain ATCC 49558 / DSM 4304 / JCM 9628 / NBRC 100126 / VC-16)).